The chain runs to 312 residues: Terpene synthase 8 (312 aa).

The short motif at 96-101 (DDYIYE) is the DDxx(x)D/E motif element. The NDxxSxxxD/E motif motif lies at 224 to 232 (NDCGSFKME).

It belongs to the terpene synthase family.

It carries out the reaction (2E,6E)-farnesyl diphosphate + H2O = discoidol + diphosphate. It participates in sesquiterpene biosynthesis. In terms of biological role, terpene synthase; part of the gene cluster that mediates the biosynthesis of the trisnorsesquiterpene discodiene which has a function during later stages of multicellular development, during the transition from fingers to Mexican hats. The terpene synthase tps8 converts its substrate farnesyl diphosphate (FDP) into the bicyclic sesquiterpene alcohol discoidol. The cytochrome P450 monooxygenase cyp521A1 then catalyzes the oxidative degradation of discoidol to form the trisnorsesquiterpene discodiene. The sequence is that of Terpene synthase 8 from Dictyostelium discoideum (Social amoeba).